Consider the following 368-residue polypeptide: Protein mab-21-like 3 (368 aa).

It belongs to the mab-21 family.

This is Protein mab-21-like 3 (mab21L3) from Xenopus laevis (African clawed frog).